The following is a 372-amino-acid chain: MRIVVKVGTSTLTHENGKLNLEIMEKLVRQIANLSNKGEEVILVTSGAIGAGMGKLNLTEKPKNLPQKQALAAIGQGLLIEIYEKFFNEYGKITAQLLLTREDFSDRKRYLNMSYTLSNLLKWGVIPVINENDTVAVEEIKIGDNDTLAALVASLVEADLLIILTDIDGLFDKDPRIYKDAKVIEVVEEFSDDLFKIAGGAGTKRGTGGMYTKIQAAKICYNSGVKMVIANGKIDNVLNRIAAGEKIGTTFLPMKNPISSRKIWIAFNAKVNGFLFVDEGAAKALVKHGKSLLPSGIVKTEGQYDVGDCVAVVDHQGREIARGLVNYSSEEVEKIKGCKTHDIESILGYKYYDEVIHRDNLVVLERGEKYGG.

Lys6 contributes to the ATP binding site. Positions 46, 133, and 145 each coordinate substrate. Residues 165 to 166 and 207 to 213 contribute to the ATP site; these read TD and TGGMYTK. The PUA domain maps to 272–350; that stretch reads NGFLFVDEGA…HDIESILGYK (79 aa).

This sequence belongs to the glutamate 5-kinase family.

It localises to the cytoplasm. The catalysed reaction is L-glutamate + ATP = L-glutamyl 5-phosphate + ADP. It participates in amino-acid biosynthesis; L-proline biosynthesis; L-glutamate 5-semialdehyde from L-glutamate: step 1/2. In terms of biological role, catalyzes the transfer of a phosphate group to glutamate to form L-glutamate 5-phosphate. The protein is Glutamate 5-kinase of Caldanaerobacter subterraneus subsp. tengcongensis (strain DSM 15242 / JCM 11007 / NBRC 100824 / MB4) (Thermoanaerobacter tengcongensis).